The primary structure comprises 287 residues: Energy-coupling factor transporter ATP-binding protein EcfA2 (287 aa).

One can recognise an ABC transporter domain in the interval 3–245 (IKFENVSYVY…SEWLQKHHLA (243 aa)). 40 to 47 (GHTGSGKS) provides a ligand contact to ATP.

This sequence belongs to the ABC transporter superfamily. Energy-coupling factor EcfA family. Forms a stable energy-coupling factor (ECF) transporter complex composed of 2 membrane-embedded substrate-binding proteins (S component), 2 ATP-binding proteins (A component) and 2 transmembrane proteins (T component).

Its subcellular location is the cell membrane. In terms of biological role, ATP-binding (A) component of a common energy-coupling factor (ECF) ABC-transporter complex. Unlike classic ABC transporters this ECF transporter provides the energy necessary to transport a number of different substrates. In Lactobacillus delbrueckii subsp. bulgaricus (strain ATCC 11842 / DSM 20081 / BCRC 10696 / JCM 1002 / NBRC 13953 / NCIMB 11778 / NCTC 12712 / WDCM 00102 / Lb 14), this protein is Energy-coupling factor transporter ATP-binding protein EcfA2.